Here is a 259-residue protein sequence, read N- to C-terminus: Global transcriptional regulator CodY (259 aa).

Residues 1-155 form a GAF domain region; that stretch reads MALLQKTRKI…GATVVGMEIL (155 aa). Residues 203 to 222 constitute a DNA-binding region (H-T-H motif); sequence ASKIADRVGITRSVIVNALR. Ser215 carries the post-translational modification Phosphoserine.

The protein belongs to the CodY family.

It is found in the cytoplasm. DNA-binding global transcriptional regulator which is involved in the adaptive response to starvation and acts by directly or indirectly controlling the expression of numerous genes in response to nutrient availability. During rapid exponential growth, CodY is highly active and represses genes whose products allow adaptation to nutrient depletion. This is Global transcriptional regulator CodY from Bacillus licheniformis (strain ATCC 14580 / DSM 13 / JCM 2505 / CCUG 7422 / NBRC 12200 / NCIMB 9375 / NCTC 10341 / NRRL NRS-1264 / Gibson 46).